A 295-amino-acid chain; its full sequence is Bifunctional protein FolD (295 aa).

Residues 166–168 (GRS), Ser-191, and Ile-232 each bind NADP(+).

The protein belongs to the tetrahydrofolate dehydrogenase/cyclohydrolase family. In terms of assembly, homodimer.

The enzyme catalyses (6R)-5,10-methylene-5,6,7,8-tetrahydrofolate + NADP(+) = (6R)-5,10-methenyltetrahydrofolate + NADPH. The catalysed reaction is (6R)-5,10-methenyltetrahydrofolate + H2O = (6R)-10-formyltetrahydrofolate + H(+). It participates in one-carbon metabolism; tetrahydrofolate interconversion. Its function is as follows. Catalyzes the oxidation of 5,10-methylenetetrahydrofolate to 5,10-methenyltetrahydrofolate and then the hydrolysis of 5,10-methenyltetrahydrofolate to 10-formyltetrahydrofolate. This Wolbachia pipientis subsp. Culex pipiens (strain wPip) protein is Bifunctional protein FolD.